The following is a 130-amino-acid chain: Cholecystokinin (130 aa).

Positions 1–20 (MYSGICICVFLAVLSASSFG) are cleaved as a signal peptide. The propeptide occupies 21 to 48 (QQTAGSHNGNPLAAELEQSLTEHHRHVR). The tract at residues 40-59 (LTEHHRHVRAPSSAGPLKPV) is disordered. The residue at position 112 (Y112) is a Sulfotyrosine. F118 carries the phenylalanine amide modification. The propeptide occupies 122 to 130 (SAEEYEYSS). Residues Y126 and Y128 each carry the sulfotyrosine modification.

The protein belongs to the gastrin/cholecystokinin family. In terms of processing, the precursor is cleaved by proteases to produce a number of active cholecystokinins. In terms of tissue distribution, highly concentrated in the duodenum. Also localized in more distal parts of the small intestine.

It is found in the secreted. In terms of biological role, this peptide hormone induces gall bladder contraction and the release of pancreatic enzymes in the gut. Its function in the brain is not clear. This is Cholecystokinin (CCK) from Struthio camelus (Common ostrich).